The chain runs to 253 residues: Polyprenal reductase (253 aa).

A run of 4 helical transmembrane segments spans residues 18–38 (LSFF…PEFL), 78–98 (FLSL…IIFG), 123–143 (HYLV…ISLY), and 200–220 (IIYS…VWVI).

The protein belongs to the steroid 5-alpha reductase family. Polyprenal reductase subfamily.

It is found in the endoplasmic reticulum membrane. The enzyme catalyses a di-trans,poly-cis-dolichal + NADP(+) = a di-trans,poly-cis-polyprenal + NADPH + H(+). The protein operates within protein modification; protein glycosylation. Plays a key role in early steps of protein N-linked glycosylation by being involved in the conversion of polyprenol into dolichol. Acts as a polyprenal reductase that mediates the reduction of polyprenal into dolichal in a NADP-dependent mechanism. Dolichols are required for the synthesis of dolichol-linked monosaccharides and the oligosaccharide precursor used for N-glycosylation. The polypeptide is Polyprenal reductase (Saccharomyces cerevisiae (strain ATCC 204508 / S288c) (Baker's yeast)).